The chain runs to 483 residues: BTB/POZ domain and ankyrin repeat-containing protein NBCL (483 aa).

Residues 25-109 form the BTB domain; the sequence is SDVTFSVEGR…LYSGQVSIVP (85 aa). A C2HC NPR-type zinc finger spans residues 115–129; it reads RPNCGERACWHTHCT. 4 residues coordinate Zn(2+): Cys-118, Cys-123, His-125, and Cys-128. ANK repeat units follow at residues 254–283, 284–313, 318–347, and 351–385; these read QKIRRMRRALDSSDVELVKLMVMGEGLNLD, EALALPYAVENCSREVVKALLELGAADVNY, SGKTPLHIAAEMVSPDMVAVLLDHHADPNV, and DGVTPLDILRTLTSDFLFKGAVPGLTHIEPNKLRL. The segment at 401–437 is disordered; sequence EGNANANSSNNNNAPCSAATPIYPPMNEDHNSSSSNA. A compositionally biased stretch (low complexity) spans 403–419; it reads NANANSSNNNNAPCSAA.

The protein belongs to the plant 'ANKYRIN-BTB/POZ' family. 'NOOT-BOP-COCH-like' (NBCL) subfamily. Homodimer. Interacts with APP1 around the plasma membrane and in the nucleus; this interaction disturbs APP1-mediated regulation of the nuclear transcription factor Y subunit (NF-YA1). Mainly expressed in root nodules, to a lesser extent in shoot apical meristems (SAM) and root meristems (RM), and barely in leaves, non-nodulating roots and root apical meristems (RAM).

Its subcellular location is the nucleus. It is found in the cytoplasm. It localises to the cell membrane. It participates in protein modification; protein ubiquitination. Its function is as follows. May act as a substrate-specific adapter of an E3 ubiquitin-protein ligase complex (CUL3-RBX1-BTB) which mediates the ubiquitination and subsequent proteasomal degradation of target proteins. Transcriptional co-regulator involved in the promotion of leaf and floral meristem fate and determinacy. Required for the abscission of senescent organs, probably by regulating the cell wall disorganization in abscission zones (AZs, e.g. pulvini at the base of leaves). Involved in the coordination of the symbiotic nodule developmental program; promotes the formation of root nodules by interacting directly with APP1 to modulate the expression of the nuclear transcription factor Y subunit (NF-YA1), a key nodulin. Necessary for the robust maintenance of nodule identity throughout the nodule developmental program. The protein is BTB/POZ domain and ankyrin repeat-containing protein NBCL of Lotus japonicus (Lotus corniculatus var. japonicus).